The sequence spans 567 residues: Arginine--tRNA ligase (567 aa).

The short motif at 128–138 (ANPTGPLHVGH) is the 'HIGH' region element.

This sequence belongs to the class-I aminoacyl-tRNA synthetase family. Monomer.

The protein resides in the cytoplasm. It catalyses the reaction tRNA(Arg) + L-arginine + ATP = L-arginyl-tRNA(Arg) + AMP + diphosphate. This Acidovorax ebreus (strain TPSY) (Diaphorobacter sp. (strain TPSY)) protein is Arginine--tRNA ligase.